We begin with the raw amino-acid sequence, 175 residues long: Small ribosomal subunit protein uS5 (175 aa).

The region spanning 19–82 (WQERVIQIRR…ADGKKHLIDI (64 aa)) is the S5 DRBM domain.

The protein belongs to the universal ribosomal protein uS5 family. In terms of assembly, part of the 30S ribosomal subunit. Contacts proteins S4 and S8.

Its function is as follows. With S4 and S12 plays an important role in translational accuracy. Functionally, located at the back of the 30S subunit body where it stabilizes the conformation of the head with respect to the body. The chain is Small ribosomal subunit protein uS5 from Nostoc punctiforme (strain ATCC 29133 / PCC 73102).